The following is a 126-amino-acid chain: Large ribosomal subunit protein bL17 (126 aa).

This sequence belongs to the bacterial ribosomal protein bL17 family. In terms of assembly, part of the 50S ribosomal subunit. Contacts protein L32.

This chain is Large ribosomal subunit protein bL17, found in Nitrosococcus oceani (strain ATCC 19707 / BCRC 17464 / JCM 30415 / NCIMB 11848 / C-107).